The sequence spans 231 residues: 2-C-methyl-D-erythritol 4-phosphate cytidylyltransferase (231 aa).

It belongs to the IspD/TarI cytidylyltransferase family. IspD subfamily.

It catalyses the reaction 2-C-methyl-D-erythritol 4-phosphate + CTP + H(+) = 4-CDP-2-C-methyl-D-erythritol + diphosphate. Its pathway is isoprenoid biosynthesis; isopentenyl diphosphate biosynthesis via DXP pathway; isopentenyl diphosphate from 1-deoxy-D-xylulose 5-phosphate: step 2/6. Catalyzes the formation of 4-diphosphocytidyl-2-C-methyl-D-erythritol from CTP and 2-C-methyl-D-erythritol 4-phosphate (MEP). This is 2-C-methyl-D-erythritol 4-phosphate cytidylyltransferase from Pseudoalteromonas atlantica (strain T6c / ATCC BAA-1087).